Reading from the N-terminus, the 264-residue chain is Vacuolar protein sorting-associated protein 75 (264 aa).

Position 3 is a phosphoserine (Ser3). The segment at 223-264 (LEDEEGESGLSADGDSEDDDGSLGEVDLPLSDEEPSSKKRKV) is disordered.

This sequence belongs to the nucleosome assembly protein (NAP) family. Homodimer. Homotetramer. Forms a complex with RTT109; consisting of a VPS75 dimer contacted by two RTT109 subunits. Interacts with RTT109; the interaction is direct. Interacts with ASF1. Interacts with histone H3/H4 heterodimers and heterotetramers via histone H3.

The protein localises to the nucleus. In terms of biological role, histone chaperone which acts as a cofactor stimulating histone H3 acetylation by RTT109. Preferentially stimulates histone H3 'Lys-9' acetylation by RTT109. May also stimulate histone H3 'Lys-56' acetylation by RTT109. Assembles nucleosomes (in vitro). The protein is Vacuolar protein sorting-associated protein 75 (VPS75) of Saccharomyces cerevisiae (strain ATCC 204508 / S288c) (Baker's yeast).